The following is a 293-amino-acid chain: L-ornithine N(alpha)-acyltransferase (293 aa).

This sequence belongs to the acetyltransferase family. OlsB subfamily.

The catalysed reaction is a (3R)-hydroxyacyl-[ACP] + L-ornithine = a lyso-ornithine lipid + holo-[ACP] + H(+). The protein operates within lipid metabolism. In terms of biological role, catalyzes the first step in the biosynthesis of ornithine lipids, which are phosphorus-free membrane lipids. Catalyzes the 3-hydroxyacyl-acyl carrier protein-dependent acylation of ornithine to form lyso-ornithine lipid (LOL). This chain is L-ornithine N(alpha)-acyltransferase, found in Agrobacterium fabrum (strain C58 / ATCC 33970) (Agrobacterium tumefaciens (strain C58)).